Here is a 305-residue protein sequence, read N- to C-terminus: Dihydroorotate dehydrogenase B (NAD(+)), catalytic subunit (305 aa).

Residues Ser-20 and 44-45 (KG) each bind FMN. Substrate contacts are provided by residues Lys-44 and 68–72 (NAIGI). Residues Asn-98 and Asn-126 each coordinate FMN. Residue Asn-126 coordinates substrate. Cys-129 (nucleophile) is an active-site residue. FMN-binding residues include Lys-165 and Ile-191. 192-193 (NT) provides a ligand contact to substrate. Residues Gly-217, 243-244 (GG), and 265-266 (GT) each bind FMN.

The protein belongs to the dihydroorotate dehydrogenase family. Type 1 subfamily. Heterotetramer of 2 PyrK and 2 PyrD type B subunits. Requires FMN as cofactor.

Its subcellular location is the cytoplasm. The enzyme catalyses (S)-dihydroorotate + NAD(+) = orotate + NADH + H(+). It functions in the pathway pyrimidine metabolism; UMP biosynthesis via de novo pathway; orotate from (S)-dihydroorotate (NAD(+) route): step 1/1. Catalyzes the conversion of dihydroorotate to orotate with NAD(+) as electron acceptor. The protein is Dihydroorotate dehydrogenase B (NAD(+)), catalytic subunit (pyrD) of Maridesulfovibrio salexigens (strain ATCC 14822 / DSM 2638 / NCIMB 8403 / VKM B-1763) (Desulfovibrio salexigens).